A 696-amino-acid chain; its full sequence is Polyribonucleotide nucleotidyltransferase (696 aa).

Mg(2+) is bound by residues aspartate 489 and aspartate 495. A KH domain is found at proline 556–isoleucine 615. An S1 motif domain is found at glycine 625–lysine 693.

The protein belongs to the polyribonucleotide nucleotidyltransferase family. In terms of assembly, component of the RNA degradosome, which is a multiprotein complex involved in RNA processing and mRNA degradation. Mg(2+) serves as cofactor.

The protein resides in the cytoplasm. It carries out the reaction RNA(n+1) + phosphate = RNA(n) + a ribonucleoside 5'-diphosphate. Its function is as follows. Involved in mRNA degradation. Catalyzes the phosphorolysis of single-stranded polyribonucleotides processively in the 3'- to 5'-direction. The protein is Polyribonucleotide nucleotidyltransferase of Coxiella burnetii (strain CbuK_Q154) (Coxiella burnetii (strain Q154)).